A 183-amino-acid polypeptide reads, in one-letter code: MNTEAAGRRVHVIQGEFKVVNDPDIVLSTILGSCVAACMRDPAAGVGGMNHFLLPGSATSPSSGADATRYGVHLMELLINGLLKQGARRDRLEAKIFGGARTIARFSNVGEQNAAFARQFLMDEGIRIVGESTGGDHGRKLEYWPSSGRARQYALTGVEAQRALQMDQRPAVPKPAESPIEFF.

The protein belongs to the CheD family.

It catalyses the reaction L-glutaminyl-[protein] + H2O = L-glutamyl-[protein] + NH4(+). Probably deamidates glutamine residues to glutamate on methyl-accepting chemotaxis receptors (MCPs), playing an important role in chemotaxis. The chain is Probable chemoreceptor glutamine deamidase CheD from Rhizobium meliloti (strain 1021) (Ensifer meliloti).